The chain runs to 817 residues: Disks large homolog 3 (817 aa).

An N-acetylmethionine mark is found at Met1 and His2. The interval 33-101 is disordered; sequence WQVPDPYGPG…GKSTPKLNGS (69 aa). Residues 40-53 show a composition bias toward gly residues; it reads GPGGGNGASAGYGG. The segment covering 57 to 69 has biased composition (polar residues); that stretch reads QTLPSQAGATPTP. 3 consecutive PDZ domains span residues 130 to 217, 226 to 311, and 379 to 465; these read EEIV…VRRR, EVNL…KVAK, and DFTR…VAQY. A Phosphoserine modification is found at Ser139. Residues 501 to 571 enclose the SH3 domain; that stretch reads KRSLYVRALF…PSKKRVEKKE (71 aa). Positions 627-802 constitute a Guanylate kinase-like domain; the sequence is ARPVIILGPM…IYNKIKQIIE (176 aa). Residue Tyr673 is modified to Phosphotyrosine.

This sequence belongs to the MAGUK family. As to quaternary structure, interacts through its PDZ domains with NETO1, GRIN2B and SYNGAP1. Interacts through its guanylate kinase-like domain with DLGAP1, DLGAP2, DLGAP3 and DLGAP4. Interacts with FLTP/C1orf192. Interacts through its PDZ domains with APC. Interacts through its first two PDZ domains with ERBB4. Interacts through its third PDZ domain with NLGN1, and probably with NLGN2 and NLGN3. Interacts with FRMPD4 (via C-terminus). Interacts with LRFN1, LRFN2 and LRFN4. Interacts with DGKI (via PDZ-binding motif).

In terms of biological role, required for learning most likely through its role in synaptic plasticity following NMDA receptor signaling. The sequence is that of Disks large homolog 3 (DLG3) from Homo sapiens (Human).